Here is a 207-residue protein sequence, read N- to C-terminus: Protein lin-7 homolog B (207 aa).

Positions Met1 to Asp13 match the Kinase interacting site motif. One can recognise an L27 domain in the interval Leu10–Gly65. One can recognise a PDZ domain in the interval Val93–Pro175. The disordered stretch occupies residues Lys187–Gly207. Positions His197 to Gly207 are enriched in polar residues.

It belongs to the lin-7 family. In terms of assembly, forms a complex with CASK and CASKIN1. Component of the brain-specific heterotrimeric complex (LIN-10-LIN-2-LIN-7 complex) composed of at least APBA1, CASK, and LIN7, which associates with the motor protein KIF17 to transport vesicles along microtubules. Forms a heterotrimeric complex composed of MMP5, LIN7B and PATJ; the N-terminal L27 domain of PALS1 interacts with the L27 domain of PATJ and the C-terminal L27 domain of PALS1 interacts with the L27 domain of LIN7B. Forms a heterotrimeric complex with DLG1 and CASK via their L27 domains. Interacts with DLG4 and GRIN2B as well as CDH1 and CTNNB1, the channels KCNJ12/Kir2.2, KCNJ4/Kir2.3 and probably KCNJ2/Kir2.1 and SLC6A12/BGT-1 via its PDZ domain. The association of LIN7A with cadherin and beta-catenin is calcium-dependent, occurs at synaptic junctions and requires the actin cytoskeleton. Interacts with EGFR, ERBB2, ERBB3 and ERBB4 with both PDZ and KID domains. Associates with KIF17 via APBA1. Interacts with ASIC3. Interacts with TOPK. Interacts with RTKN. Interacts with APBA1. Interacts with MPP7. Interacts with DLG2. Interacts with DLG3.

The protein localises to the cell membrane. It is found in the basolateral cell membrane. Its subcellular location is the cell junction. It localises to the postsynaptic density membrane. The protein resides in the tight junction. In terms of biological role, plays a role in establishing and maintaining the asymmetric distribution of channels and receptors at the plasma membrane of polarized cells. Forms membrane-associated multiprotein complexes that may regulate delivery and recycling of proteins to the correct membrane domains. The tripartite complex composed of LIN7 (LIN7A, LIN7B or LIN7C), CASK and APBA1 associates with the motor protein KIF17 to transport vesicles containing N-methyl-D-aspartate (NMDA) receptor subunit NR2B along microtubules. This complex may have the potential to couple synaptic vesicle exocytosis to cell adhesion in brain. Ensures the proper localization of GRIN2B (subunit 2B of the NMDA receptor) to neuronal postsynaptic density and may function in localizing synaptic vesicles at synapses where it is recruited by beta-catenin and cadherin. Required to localize Kir2 channels, GABA transporter (SLC6A12) and EGFR/ERBB1, ERBB2, ERBB3 and ERBB4 to the basolateral membrane of epithelial cells. May increase the amplitude of ASIC3 acid-evoked currents by stabilizing the channel at the cell surface. This Homo sapiens (Human) protein is Protein lin-7 homolog B (LIN7B).